Here is a 516-residue protein sequence, read N- to C-terminus: Maturase K (516 aa).

It belongs to the intron maturase 2 family. MatK subfamily.

The protein resides in the plastid. Its subcellular location is the chloroplast. In terms of biological role, usually encoded in the trnK tRNA gene intron. Probably assists in splicing its own and other chloroplast group II introns. This chain is Maturase K, found in Cypripedium calceolus (Yellow lady's slipper).